An 874-amino-acid polypeptide reads, in one-letter code: Coatomer subunit gamma-1 (874 aa).

Residues M1–E11 show a composition bias toward basic and acidic residues. A disordered region spans residues M1 to H21. HEAT repeat units follow at residues T64–D101, K283–S320, V322–S355, and S356–R392. At T594 the chain carries Phosphothreonine. The interval R609–G874 is interaction with ZNF289/ARFGAP2.

The protein belongs to the COPG family. Oligomeric complex that consists of at least the alpha, beta, beta', gamma, delta, epsilon and zeta subunits. Interacts with ZNF289/ARFGAP2 through its C-terminal appendage domain. Interacts with EGFR upon EGF treatment; interaction is essential for regulation of EGF-dependent nuclear transport of EGFR by retrograde trafficking from the Golgi to the ER. The coatomer interacts with KDEL receptors; the interaction is important for retrograde trafficking of KDEL-bearing proteins from the Golgi to the endoplasmic reticulum. Interacts with COPB1. Interacts with TMED10 (via C-terminus). Interacts with TMED2, TMED3, TMED7 and TMED9.

It localises to the cytoplasm. It is found in the cytosol. The protein resides in the golgi apparatus membrane. The protein localises to the cytoplasmic vesicle. Its subcellular location is the COPI-coated vesicle membrane. In terms of biological role, the coatomer is a cytosolic protein complex that binds to dilysine motifs and reversibly associates with Golgi non-clathrin-coated vesicles, which further mediate biosynthetic protein transport from the ER, via the Golgi up to the trans Golgi network. Coatomer complex is required for budding from Golgi membranes, and is essential for the retrograde Golgi-to-ER transport of dilysine-tagged proteins. In mammals, the coatomer can only be recruited by membranes associated to ADP-ribosylation factors (ARFs), which are small GTP-binding proteins; the complex also influences the Golgi structural integrity, as well as the processing, activity, and endocytic recycling of LDL receptors. Required for limiting lipid storage in lipid droplets. Involved in lipid homeostasis by regulating the presence of perilipin family members PLIN2 and PLIN3 at the lipid droplet surface and promoting the association of adipocyte triglyceride lipase (PNPLA2) with the lipid droplet surface to mediate lipolysis. The polypeptide is Coatomer subunit gamma-1 (Copg1) (Rattus norvegicus (Rat)).